Reading from the N-terminus, the 553-residue chain is Glycerol kinase 3 (553 aa).

Residue T20 participates in substrate binding. R24 lines the ATP pocket. Residues R94, Y148, and D259 each contribute to the substrate site. ATP-binding positions include T281, G326, and 427–431 (GMTSN).

Belongs to the FGGY kinase family.

It is found in the mitochondrion outer membrane. The protein localises to the cytoplasm. The catalysed reaction is glycerol + ATP = sn-glycerol 3-phosphate + ADP + H(+). The protein operates within polyol metabolism; glycerol degradation via glycerol kinase pathway; sn-glycerol 3-phosphate from glycerol: step 1/1. In terms of biological role, may be involved in the regulation of glycerol uptake and metabolism. In Homo sapiens (Human), this protein is Glycerol kinase 3.